We begin with the raw amino-acid sequence, 467 residues long: Neutrophil collagenase (467 aa).

Residues Met1 to Ala20 form the signal peptide. Residues Phe21–Met100 constitute a propeptide, activation peptide. Asn54 and Asn73 each carry an N-linked (GlcNAc...) asparagine glycan. The Cysteine switch motif lies at Pro89 to Ser96. Cys91 contacts Zn(2+). N-linked (GlcNAc...) asparagine glycosylation is present at Asn112. Asp157 serves as a coordination point for Ca(2+). The Zn(2+) site is built by His167 and Asp169. Residues Asp174, Gly175, Asn177, and Ile179 each contribute to the Ca(2+) site. A Zn(2+)-binding site is contributed by His182. Gly189, Gly191, and Asp193 together coordinate Ca(2+). His195 lines the Zn(2+) pocket. Residues Asp197 and Glu200 each coordinate Ca(2+). Residue Asn204 is glycosylated (N-linked (GlcNAc...) asparagine). His217 serves as a coordination point for Zn(2+). Glu218 is an active-site residue. Zn(2+) is bound by residues His221 and His227. Residue Asn246 is glycosylated (N-linked (GlcNAc...) asparagine). Hemopexin repeat units follow at residues Pro276 to Leu325, Pro326 to Ser372, Val374 to Ile420, and Glu421 to Cys464. Residues Cys279 and Cys464 are joined by a disulfide bond. Asp286 provides a ligand contact to Ca(2+). Ca(2+) contacts are provided by Asp378 and Asp425.

It belongs to the peptidase M10A family. It depends on Ca(2+) as a cofactor. Zn(2+) serves as cofactor. Neutrophils.

It is found in the cytoplasmic granule. The protein localises to the secreted. Its subcellular location is the extracellular space. It localises to the extracellular matrix. It carries out the reaction Cleavage of interstitial collagens in the triple helical domain. Unlike EC 3.4.24.7, this enzyme cleaves type III collagen more slowly than type I.. Cannot be activated without removal of the activation peptide. Functionally, can degrade fibrillar type I, II, and III collagens. This is Neutrophil collagenase (MMP8) from Homo sapiens (Human).